The sequence spans 335 residues: NAC domain-containing protein 87 (335 aa).

One can recognise an NAC domain in the interval 21–172 (LPPGFRFHPT…EWVVCRVFHK (152 aa)). Residues 119–178 (VGMKKTLVFYRGRAPKGEKTNWVMHEYRLEGKYSYYNLPKSARDEWVVCRVFHKNNPSTT) mediate DNA binding.

It is found in the nucleus. In terms of biological role, binds to the promoter regions of genes involved in chlorophyll catabolic processes, such as NYC1, SGR1, SGR2 and PAO. This is NAC domain-containing protein 87 from Arabidopsis thaliana (Mouse-ear cress).